A 213-amino-acid polypeptide reads, in one-letter code: T-cell surface glycoprotein CD8 beta chain (213 aa).

The N-terminal stretch at 1-21 (MQPWLWLVFSMKLAALWSSSA) is a signal peptide. One can recognise an Ig-like V-type domain in the interval 22 to 133 (LIQTPSSLLV…KMVFGTGTKL (112 aa)). Topologically, residues 22–175 (LIQTPSSLLV…QKGLTCSLTT (154 aa)) are extracellular. N-linked (GlcNAc...) asparagine glycosylation is present at Asn-34. A disulfide bridge connects residues Cys-41 and Cys-117. A helical membrane pass occupies residues 176–196 (LSLLVVCILLLLAFLGVAVYF). Over 197 to 213 (YCVRRRARIHFMKQFHK) the chain is Cytoplasmic.

As to quaternary structure, forms disulfide-linked heterodimers with CD8A at the cell surface. Interacts with CD3D; this interaction couples TCR-CD3 with CD8. Interacts with LCK. Palmitoylated at the cytoplasmic tail and thereby targets the heterodimer CD8A/CD8B to lipid rafts unlike CD8A homodimers.

It is found in the membrane. In terms of biological role, integral membrane glycoprotein that plays an essential role in the immune response and serves multiple functions in responses against both external and internal offenses. In T-cells, functions primarily as a coreceptor for MHC class I molecule:peptide complex. The antigens presented by class I peptides are derived from cytosolic proteins while class II derived from extracellular proteins. Interacts simultaneously with the T-cell receptor (TCR) and the MHC class I proteins presented by antigen presenting cells (APCs). In turn, recruits the Src kinase LCK to the vicinity of the TCR-CD3 complex. A palmitoylation site in the cytoplasmic tail of CD8B chain contributes to partitioning of CD8 into the plasma membrane lipid rafts where signaling proteins are enriched. Once LCK recruited, it initiates different intracellular signaling pathways by phosphorylating various substrates ultimately leading to lymphokine production, motility, adhesion and activation of cytotoxic T-lymphocytes (CTLs). Additionally, plays a critical role in thymic selection of CD8+ T-cells. This Mus musculus (Mouse) protein is T-cell surface glycoprotein CD8 beta chain (Cd8b).